Here is a 621-residue protein sequence, read N- to C-terminus: tRNA uridine 5-carboxymethylaminomethyl modification enzyme MnmG (621 aa).

Position 8-13 (8-13 (GAGHAG)) interacts with FAD. 269–283 (GPRYCPSIEDKIHRF) lines the NAD(+) pocket.

This sequence belongs to the MnmG family. Homodimer. Heterotetramer of two MnmE and two MnmG subunits. FAD is required as a cofactor.

The protein resides in the cytoplasm. NAD-binding protein involved in the addition of a carboxymethylaminomethyl (cmnm) group at the wobble position (U34) of certain tRNAs, forming tRNA-cmnm(5)s(2)U34. The sequence is that of tRNA uridine 5-carboxymethylaminomethyl modification enzyme MnmG from Chlorobium phaeovibrioides (strain DSM 265 / 1930) (Prosthecochloris vibrioformis (strain DSM 265)).